The sequence spans 363 residues: NAD(P)H-quinone oxidoreductase subunit 1, chloroplastic (363 aa).

Helical transmembrane passes span 30–50 (LVPI…IVWL), 104–124 (IAVI…HLVL), 127–147 (LGIG…GLLM), 253–273 (FGLF…FVTV), 300–320 (VFGT…FLFI), and 343–363 (FLLP…LLSL).

It belongs to the complex I subunit 1 family. NDH is composed of at least 16 different subunits, 5 of which are encoded in the nucleus.

It is found in the plastid. The protein localises to the chloroplast thylakoid membrane. It catalyses the reaction a plastoquinone + NADH + (n+1) H(+)(in) = a plastoquinol + NAD(+) + n H(+)(out). The enzyme catalyses a plastoquinone + NADPH + (n+1) H(+)(in) = a plastoquinol + NADP(+) + n H(+)(out). In terms of biological role, NDH shuttles electrons from NAD(P)H:plastoquinone, via FMN and iron-sulfur (Fe-S) centers, to quinones in the photosynthetic chain and possibly in a chloroplast respiratory chain. The immediate electron acceptor for the enzyme in this species is believed to be plastoquinone. Couples the redox reaction to proton translocation, and thus conserves the redox energy in a proton gradient. In Piper cenocladum (Ant piper), this protein is NAD(P)H-quinone oxidoreductase subunit 1, chloroplastic.